The following is a 494-amino-acid chain: Aspartyl/glutamyl-tRNA(Asn/Gln) amidotransferase subunit B (494 aa).

It belongs to the GatB/GatE family. GatB subfamily. Heterotrimer of A, B and C subunits.

The enzyme catalyses L-glutamyl-tRNA(Gln) + L-glutamine + ATP + H2O = L-glutaminyl-tRNA(Gln) + L-glutamate + ADP + phosphate + H(+). It carries out the reaction L-aspartyl-tRNA(Asn) + L-glutamine + ATP + H2O = L-asparaginyl-tRNA(Asn) + L-glutamate + ADP + phosphate + 2 H(+). Its function is as follows. Allows the formation of correctly charged Asn-tRNA(Asn) or Gln-tRNA(Gln) through the transamidation of misacylated Asp-tRNA(Asn) or Glu-tRNA(Gln) in organisms which lack either or both of asparaginyl-tRNA or glutaminyl-tRNA synthetases. The reaction takes place in the presence of glutamine and ATP through an activated phospho-Asp-tRNA(Asn) or phospho-Glu-tRNA(Gln). The polypeptide is Aspartyl/glutamyl-tRNA(Asn/Gln) amidotransferase subunit B (Synechococcus elongatus (strain ATCC 33912 / PCC 7942 / FACHB-805) (Anacystis nidulans R2)).